Reading from the N-terminus, the 369-residue chain is Choline kinase B2 (369 aa).

Belongs to the choline/ethanolamine kinase family. The cofactor is Mg(2+).

The enzyme catalyses choline + ATP = phosphocholine + ADP + H(+). Its pathway is phospholipid metabolism; phosphatidylcholine biosynthesis; phosphocholine from choline: step 1/1. Its function is as follows. Catalyzes the first step in phosphatidylcholine biosynthesis. Phosphorylates choline. The polypeptide is Choline kinase B2 (ckb-2) (Caenorhabditis elegans).